Here is a 542-residue protein sequence, read N- to C-terminus: Calcium/calmodulin-dependent protein kinase type II subunit beta (542 aa).

The Protein kinase domain occupies 14-272 (YQLYEDIGKG…AHEALKHPWV (259 aa)). Tyr-17 carries the phosphotyrosine modification. Residues 20–28 (IGKGAFSVV) and Lys-43 each bind ATP. Asp-136 (proton acceptor) is an active-site residue. Residues 283 to 292 (HRQETVECLK) are autoinhibitory domain. Phosphothreonine; by autocatalysis is present on Thr-287. The tract at residues 291-301 (LKKFNARRKLK) is calmodulin-binding. Phosphothreonine; by autocatalysis is present on residues Thr-306 and Thr-307. Residues 349-407 (ADGVKPQTNSTKNSAAATSPKGTLPPAALEPQTTVIHNPVDGIKESSDSTHTTIEDEDT) are disordered. The segment covering 354-369 (PQTNSTKNSAAATSPK) has biased composition (polar residues). Phosphoserine occurs at positions 367, 394, and 397. 2 positions are modified to phosphothreonine: Thr-400 and Thr-401.

Belongs to the protein kinase superfamily. CAMK Ser/Thr protein kinase family. CaMK subfamily. CAMK2 is composed of 4 different chains: alpha (CAMK2A), beta (CAMK2B), gamma (CAMK2G), and delta (CAMK2D). The different isoforms assemble into homo- or heteromultimeric holoenzymes composed of 12 subunits with two hexameric rings stacked one on top of the other. Interacts with SYNGAP1, CAMK2N2 and MPDZ. Interacts with FOXO3. Interacts (when in a kinase inactive state not associated with calmodulin) with ARC; leading to target ARC to inactive synapses. Interacts with CAMK2N1; this interaction requires CAMK2B activation by Ca(2+). Post-translationally, autophosphorylation of Thr-287 following activation by Ca(2+)/calmodulin. Phosphorylation of Thr-287 locks the kinase into an activated state.

It localises to the cytoplasm. The protein resides in the cytoskeleton. It is found in the microtubule organizing center. The protein localises to the centrosome. Its subcellular location is the sarcoplasmic reticulum membrane. It localises to the synapse. The enzyme catalyses L-seryl-[protein] + ATP = O-phospho-L-seryl-[protein] + ADP + H(+). It carries out the reaction L-threonyl-[protein] + ATP = O-phospho-L-threonyl-[protein] + ADP + H(+). Activated by Ca(2+)/calmodulin. Binding of calmodulin results in conformational change that relieves intrasteric autoinhibition and allows autophosphorylation of Thr-287 which turns the kinase in a constitutively active form and confers to the kinase a Ca(2+)-independent activity. Calcium/calmodulin-dependent protein kinase that functions autonomously after Ca(2+)/calmodulin-binding and autophosphorylation, and is involved in dendritic spine and synapse formation, neuronal plasticity and regulation of sarcoplasmic reticulum Ca(2+) transport in skeletal muscle. In neurons, plays an essential structural role in the reorganization of the actin cytoskeleton during plasticity by binding and bundling actin filaments in a kinase-independent manner. This structural function is required for correct targeting of CaMK2A, which acts downstream of NMDAR to promote dendritic spine and synapse formation and maintain synaptic plasticity which enables long-term potentiation (LTP) and hippocampus-dependent learning. In developing hippocampal neurons, promotes arborization of the dendritic tree and in mature neurons, promotes dendritic remodeling. Also regulates the migration of developing neurons. Participates in the modulation of skeletal muscle function in response to exercise. In slow-twitch muscles, is involved in regulation of sarcoplasmic reticulum (SR) Ca(2+) transport and in fast-twitch muscle participates in the control of Ca(2+) release from the SR through phosphorylation of triadin, a ryanodine receptor-coupling factor, and phospholamban (PLN/PLB), an endogenous inhibitor of SERCA2A/ATP2A2. In response to interferon-gamma (IFN-gamma) stimulation, catalyzes phosphorylation of STAT1, stimulating the JAK-STAT signaling pathway. Phosphorylates reticulophagy regulator RETREG1 at 'Ser-147' under endoplasmic reticulum stress conditions which enhances RETREG1 oligomerization and its membrane scission and reticulophagy activity. The protein is Calcium/calmodulin-dependent protein kinase type II subunit beta (CAMK2B) of Bos taurus (Bovine).